The following is a 71-amino-acid chain: Phenoloxidase 3 (71 aa).

Residues His3 and His29 each contribute to the Cu cation site.

This sequence belongs to the tyrosinase family. It depends on Cu(2+) as a cofactor. In terms of processing, upon activation, a trypsin type protease cleaves prophenol oxidase to yield the active enzyme. Hemocytes and plasma.

The protein resides in the secreted. It carries out the reaction 2 L-dopa + O2 = 2 L-dopaquinone + 2 H2O. It catalyses the reaction L-tyrosine + O2 = L-dopaquinone + H2O. This is a copper-containing oxidase that functions in the formation of pigments such as melanins and other polyphenolic compounds. Catalyzes the rate-limiting conversions of tyrosine to DOPA, DOPA to DOPA-quinone and possibly 5,6 dihydroxyindole to indole-5'6 quinone. This Sarcophaga argyrostoma (Flesh fly) protein is Phenoloxidase 3.